The following is a 352-amino-acid chain: Protein Wnt-3a (352 aa).

The signal sequence occupies residues Met-1–Ala-18. 9 cysteine pairs are disulfide-bonded: Cys-77/Cys-88, Cys-128/Cys-136, Cys-138/Cys-155, Cys-203/Cys-217, Cys-205/Cys-212, Cys-297/Cys-312, Cys-327/Cys-342, Cys-329/Cys-339, and Cys-334/Cys-335. An N-linked (GlcNAc...) asparagine glycan is attached at Asn-87. Residue Ser-209 is the site of O-palmitoleoyl serine attachment. The N-linked (GlcNAc...) asparagine glycan is linked to Asn-298.

It belongs to the Wnt family. Post-translationally, disulfide bonds have critical and distinct roles in secretion and activity. Loss of each conserved cysteine results in high molecular weight oxidized Wnt oligomers, which are formed through inter-Wnt disulfide bonding. Palmitoleoylation is required for efficient binding to frizzled receptors. Depalmitoleoylation leads to Wnt signaling pathway inhibition. At neurula in anterior neural fold; at tailbud in dorsal midline of midbrain.

The protein localises to the secreted. The protein resides in the extracellular space. Its subcellular location is the extracellular matrix. Ligand for members of the frizzled family of seven transmembrane receptors. Functions in the canonical Wnt signaling pathway that results in activation of transcription factors of the TCF/LEF family. Required for normal embryonic mesoderm development and formation of caudal somites. Required for normal morphogenesis of the developing neural tube. The protein is Protein Wnt-3a (wnt3a) of Xenopus laevis (African clawed frog).